The chain runs to 145 residues: Large ribosomal subunit protein uL15 (145 aa).

The tract at residues 1–42 (MELHTLKATPGSRKAKHRVGRGHAAGKGKQAGRGQSGQTKRS) is disordered. Residues 13–26 (RKAKHRVGRGHAAG) show a composition bias toward basic residues.

The protein belongs to the universal ribosomal protein uL15 family. In terms of assembly, part of the 50S ribosomal subunit.

Binds to the 23S rRNA. This is Large ribosomal subunit protein uL15 from Metamycoplasma arthritidis (strain 158L3-1) (Mycoplasma arthritidis).